A 268-amino-acid chain; its full sequence is tRNA (guanine-N(7)-)-methyltransferase (268 aa).

Residues 1–21 are disordered; the sequence is MMAGAEAPQPQKRYYRQRAHS. Ser-21 bears the Phosphoserine mark. 6 residues coordinate S-adenosyl-L-methionine: Gly-78, Glu-101, Arg-103, Asn-134, Ala-135, and Leu-154. Asp-157 is a catalytic residue. The segment at 158–166 is alphaC helix; the sequence is PHFKRTKHK. S-adenosyl-L-methionine contacts are provided by Thr-232 and Glu-234. The alpha6 helix stretch occupies residues 232 to 240; that stretch reads TEEGKKVLR.

This sequence belongs to the class I-like SAM-binding methyltransferase superfamily. TrmB family. As to quaternary structure, catalytic component of the METTL1-WDR4 complex, composed of METTL1 and WDR4. Post-translationally, phosphorylation at Ser-21 by PKB/AKT1 inactivates its methyltransferase activity via a steric interference mechanism in the active site that locally disrupts the catalytic center. Phosphorylation at Ser-21 does not affect the interaction with WDR4.

It is found in the nucleus. It carries out the reaction guanosine(46) in tRNA + S-adenosyl-L-methionine = N(7)-methylguanosine(46) in tRNA + S-adenosyl-L-homocysteine. The enzyme catalyses a guanosine in mRNA + S-adenosyl-L-methionine = an N(7)-methylguanosine in mRNA + S-adenosyl-L-homocysteine. It catalyses the reaction a guanosine in miRNA + S-adenosyl-L-methionine = an N(7)-methylguanosine in miRNA + S-adenosyl-L-homocysteine. The protein operates within tRNA modification; N(7)-methylguanine-tRNA biosynthesis. Functionally, catalytic component of METTL1-WDR4 methyltransferase complex that mediates the formation of N(7)-methylguanine in a subset of RNA species, such as tRNAs, mRNAs and microRNAs (miRNAs). Catalyzes the formation of N(7)-methylguanine at position 46 (m7G46) in a large subset of tRNAs that contain the 5'-RAGGU-3' motif within the variable loop. M7G46 interacts with C13-G22 in the D-loop to stabilize tRNA tertiary structure and protect tRNAs from decay. Also acts as a methyltransferase for a subset of internal N(7)-methylguanine in mRNAs. Internal N(7)-methylguanine methylation of mRNAs in response to stress promotes their relocalization to stress granules, thereby suppressing their translation. Also methylates a specific subset of miRNAs, such as let-7. N(7)-methylguanine methylation of let-7 miRNA promotes let-7 miRNA processing by disrupting an inhibitory secondary structure within the primary miRNA transcript (pri-miRNA). Acts as a regulator of embryonic stem cell self-renewal and differentiation. This Mus musculus (Mouse) protein is tRNA (guanine-N(7)-)-methyltransferase.